The chain runs to 166 residues: Large ribosomal subunit protein uL18c (166 aa).

Residues 1–44 (MAAATSLSFFHSTLASSSSSSVQQLSLPPKFVNFRPQTLPLIQA) constitute a chloroplast transit peptide.

Belongs to the universal ribosomal protein uL18 family. Component of the chloroplast large ribosomal subunit (LSU). Mature 70S chloroplast ribosomes of higher plants consist of a small (30S) and a large (50S) subunit. The 30S small subunit contains 1 molecule of ribosomal RNA (16S rRNA) and 24 different proteins. The 50S large subunit contains 3 rRNA molecules (23S, 5S and 4.5S rRNA) and 33 different proteins.

It localises to the plastid. The protein resides in the chloroplast. Its function is as follows. Component of the chloroplast ribosome (chloro-ribosome), a dedicated translation machinery responsible for the synthesis of chloroplast genome-encoded proteins, including proteins of the transcription and translation machinery and components of the photosynthetic apparatus. This is Large ribosomal subunit protein uL18c (RPL18) from Spinacia oleracea (Spinach).